The sequence spans 98 residues: Aspartyl/glutamyl-tRNA(Asn/Gln) amidotransferase subunit C (98 aa).

Belongs to the GatC family. As to quaternary structure, heterotrimer of A, B and C subunits.

It catalyses the reaction L-glutamyl-tRNA(Gln) + L-glutamine + ATP + H2O = L-glutaminyl-tRNA(Gln) + L-glutamate + ADP + phosphate + H(+). The catalysed reaction is L-aspartyl-tRNA(Asn) + L-glutamine + ATP + H2O = L-asparaginyl-tRNA(Asn) + L-glutamate + ADP + phosphate + 2 H(+). Its function is as follows. Allows the formation of correctly charged Asn-tRNA(Asn) or Gln-tRNA(Gln) through the transamidation of misacylated Asp-tRNA(Asn) or Glu-tRNA(Gln) in organisms which lack either or both of asparaginyl-tRNA or glutaminyl-tRNA synthetases. The reaction takes place in the presence of glutamine and ATP through an activated phospho-Asp-tRNA(Asn) or phospho-Glu-tRNA(Gln). The chain is Aspartyl/glutamyl-tRNA(Asn/Gln) amidotransferase subunit C from Micrococcus luteus (strain ATCC 4698 / DSM 20030 / JCM 1464 / CCM 169 / CCUG 5858 / IAM 1056 / NBRC 3333 / NCIMB 9278 / NCTC 2665 / VKM Ac-2230) (Micrococcus lysodeikticus).